The primary structure comprises 209 residues: Uracil phosphoribosyltransferase (209 aa).

5-phospho-alpha-D-ribose 1-diphosphate is bound by residues Arg-79, Arg-104, and 131–139 (DPMLATGGS). Residues Ile-194 and 199–201 (GDA) each bind uracil. A 5-phospho-alpha-D-ribose 1-diphosphate-binding site is contributed by Asp-200.

The protein belongs to the UPRTase family. Mg(2+) serves as cofactor.

The enzyme catalyses UMP + diphosphate = 5-phospho-alpha-D-ribose 1-diphosphate + uracil. The protein operates within pyrimidine metabolism; UMP biosynthesis via salvage pathway; UMP from uracil: step 1/1. Its activity is regulated as follows. Allosterically activated by GTP. Its function is as follows. Catalyzes the conversion of uracil and 5-phospho-alpha-D-ribose 1-diphosphate (PRPP) to UMP and diphosphate. The protein is Uracil phosphoribosyltransferase of Symbiobacterium thermophilum (strain DSM 24528 / JCM 14929 / IAM 14863 / T).